Reading from the N-terminus, the 82-residue chain is Small ribosomal subunit protein bS18 (82 aa).

Positions 1–25 (MKRNNMKRARMEQSRRPKKNPLKAE) are disordered.

Belongs to the bacterial ribosomal protein bS18 family. Part of the 30S ribosomal subunit. Forms a tight heterodimer with protein bS6.

In terms of biological role, binds as a heterodimer with protein bS6 to the central domain of the 16S rRNA, where it helps stabilize the platform of the 30S subunit. This Corynebacterium urealyticum (strain ATCC 43042 / DSM 7109) protein is Small ribosomal subunit protein bS18.